The sequence spans 585 residues: Arginine--tRNA ligase (585 aa).

The 'HIGH' region motif lies at 126–136 (PNIAKEMHVGH).

It belongs to the class-I aminoacyl-tRNA synthetase family. Monomer.

The protein resides in the cytoplasm. The enzyme catalyses tRNA(Arg) + L-arginine + ATP = L-arginyl-tRNA(Arg) + AMP + diphosphate. The sequence is that of Arginine--tRNA ligase from Cyanothece sp. (strain PCC 7425 / ATCC 29141).